A 376-amino-acid chain; its full sequence is Ribosomal RNA large subunit methyltransferase G (376 aa).

The protein belongs to the methyltransferase superfamily. RlmG family.

Its subcellular location is the cytoplasm. The enzyme catalyses guanosine(1835) in 23S rRNA + S-adenosyl-L-methionine = N(2)-methylguanosine(1835) in 23S rRNA + S-adenosyl-L-homocysteine + H(+). Its function is as follows. Specifically methylates the guanine in position 1835 (m2G1835) of 23S rRNA. The sequence is that of Ribosomal RNA large subunit methyltransferase G from Vibrio vulnificus (strain CMCP6).